Reading from the N-terminus, the 599-residue chain is uncharacterized protein (599 aa).

The span at 1 to 13 (MSSSSSHNSFSGS) shows a compositional bias: low complexity. Disordered regions lie at residues 1 to 27 (MSSS…IDGL) and 41 to 86 (YPSN…DDTN). The span at 14–27 (KTNAAEGQNSIDGL) shows a compositional bias: polar residues. Basic and acidic residues predominate over residues 44 to 70 (NEEKEVKETDIVPDENKVNELDVHKQS). 14 helical membrane passes run 97–117 (IVVP…TIVT), 135–155 (WIGS…GVFC), 162–182 (IVLY…GASQ), 192–212 (AIQG…ISDI), 223–243 (GILA…GGAI), 251–271 (WIFF…VVFL), 290–310 (FIGL…ISLG), 321–341 (ILCY…YDTF), 359–379 (AALL…AYYV), 396–416 (VHTI…GMVL), 423–443 (LPLI…MICV), 452–472 (VMGL…PPLI), 489–509 (TLMF…EVIF), and 552–572 (VIWI…FFIK).

The protein belongs to the major facilitator superfamily. TCR/Tet family.

It is found in the membrane. This is an uncharacterized protein from Schizosaccharomyces pombe (strain 972 / ATCC 24843) (Fission yeast).